The following is a 270-amino-acid chain: Abhydrolase domain-containing protein C22H12.03 (270 aa).

Residues 21–257 (PPVLIFHGLL…CGHWVHFEKP (237 aa)) form the AB hydrolase-1 domain. Catalysis depends on charge relay system residues Ser95, Glu190, and His250.

Belongs to the AB hydrolase superfamily.

It localises to the mitochondrion. The sequence is that of Abhydrolase domain-containing protein C22H12.03 from Schizosaccharomyces pombe (strain 972 / ATCC 24843) (Fission yeast).